The primary structure comprises 323 residues: Small ribosomal subunit protein uS2 (323 aa).

Residues 295–323 are disordered; it reads VVNRDRAGFNKKQPKAEEAAKPAEKKAEK.

It belongs to the universal ribosomal protein uS2 family.

The chain is Small ribosomal subunit protein uS2 from Mycoplasmoides gallisepticum (strain R(low / passage 15 / clone 2)) (Mycoplasma gallisepticum).